Consider the following 428-residue polypeptide: Putative gustatory receptor 2a (428 aa).

At 1–40 the chain is on the cytoplasmic side; the sequence is MDTLRALEPLHRACQVCNLWPWRLAPPPDSEGILLRRSRW. A helical transmembrane segment spans residues 41–61; it reads LELYGWTVLIAATSFTVYGLF. At 62 to 145 the chain is on the extracellular side; that stretch reads QESSVEEKQD…INMRRQTSRR (84 aa). A helical membrane pass occupies residues 146 to 166; it reads AVWILWGYAVSQLLILGAKLL. The Cytoplasmic portion of the chain corresponds to 167 to 173; the sequence is SRGDRFP. Residues 174–194 traverse the membrane as a helical segment; the sequence is IYWISYLLPLLVCGLRYFQIF. An N-linked (GlcNAc...) asparagine glycan is attached at Asn-195. The Extracellular segment spans residues 195–250; the sequence is NATQLVRQRLDVLLVALQQLQLHQKGPAVDTVLEEQEDLEEAAMDRLIAVRLVYQR. A helical membrane pass occupies residues 251-271; it reads VWALVALLNRCYGLSMLMQVG. Residues 272-300 are Cytoplasmic-facing; the sequence is NDFLAITSNCYWMFLNFRQSAASPFDILQ. Residues 301–321 form a helical membrane-spanning segment; sequence IVASGVWSAPHLGNVLVLSLL. Topologically, residues 322-349 are extracellular; the sequence is CDRTAQCASRLALCLHQVSVDLRNESHN. Asn-345 is a glycosylation site (N-linked (GlcNAc...) asparagine). A helical membrane pass occupies residues 350–370; it reads ALVGTLVRYCAPLIILVPLQI. Over 371–395 the chain is Cytoplasmic; that stretch reads TQFSLQLLHQRLHFSAAGFFNVDCT. The helical transmembrane segment at 396-416 threads the bilayer; it reads LLYTIVGATTTYLIILIQFHM. The Extracellular portion of the chain corresponds to 417–428; it reads SESTIGSDSNGQ.

The protein belongs to the insect chemoreceptor superfamily. Gustatory receptor (GR) family. Gr2a subfamily. As to expression, expressed in neurons of the terminal external chemosensory organ, the dorsal external chemosensory organ, as well as in the dorsal pharyngeal sense organ of larvae.

It localises to the cell membrane. In terms of biological role, probable gustatory receptor which mediates acceptance or avoidance behavior, depending on its not yet determined substrates. The chain is Putative gustatory receptor 2a (Gr2a) from Drosophila melanogaster (Fruit fly).